The chain runs to 173 residues: 6,7-dimethyl-8-ribityllumazine synthase (173 aa).

Residues Phe24, 58-60 (ALE), and 82-84 (AVI) each bind 5-amino-6-(D-ribitylamino)uracil. (2S)-2-hydroxy-3-oxobutyl phosphate is bound at residue 87–88 (ET). Residue His90 is the Proton donor of the active site. Asn115 serves as a coordination point for 5-amino-6-(D-ribitylamino)uracil. Arg129 is a binding site for (2S)-2-hydroxy-3-oxobutyl phosphate. The segment at 150–173 (ALEPEEDDEDDEDEDFDDEEDDGR) is disordered. A compositionally biased stretch (acidic residues) spans 152–173 (EPEEDDEDDEDEDFDDEEDDGR).

The protein belongs to the DMRL synthase family.

The enzyme catalyses (2S)-2-hydroxy-3-oxobutyl phosphate + 5-amino-6-(D-ribitylamino)uracil = 6,7-dimethyl-8-(1-D-ribityl)lumazine + phosphate + 2 H2O + H(+). Its pathway is cofactor biosynthesis; riboflavin biosynthesis; riboflavin from 2-hydroxy-3-oxobutyl phosphate and 5-amino-6-(D-ribitylamino)uracil: step 1/2. Its function is as follows. Catalyzes the formation of 6,7-dimethyl-8-ribityllumazine by condensation of 5-amino-6-(D-ribitylamino)uracil with 3,4-dihydroxy-2-butanone 4-phosphate. This is the penultimate step in the biosynthesis of riboflavin. The polypeptide is 6,7-dimethyl-8-ribityllumazine synthase (Bordetella pertussis (strain Tohama I / ATCC BAA-589 / NCTC 13251)).